The sequence spans 663 residues: DNA ligase (663 aa).

NAD(+) is bound by residues 33-37, 82-83, and E112; these read DYSYD and SI. Catalysis depends on K114, which acts as the N6-AMP-lysine intermediate. The NAD(+) site is built by R135, E171, K285, and K309. Residues C403, C406, C419, and C424 each contribute to the Zn(2+) site. In terms of domain architecture, BRCT spans 581–663; it reads DKEAPLQGKV…LRILDAKSVS (83 aa).

The protein belongs to the NAD-dependent DNA ligase family. LigA subfamily. Mg(2+) is required as a cofactor. The cofactor is Mn(2+).

The enzyme catalyses NAD(+) + (deoxyribonucleotide)n-3'-hydroxyl + 5'-phospho-(deoxyribonucleotide)m = (deoxyribonucleotide)n+m + AMP + beta-nicotinamide D-nucleotide.. Functionally, DNA ligase that catalyzes the formation of phosphodiester linkages between 5'-phosphoryl and 3'-hydroxyl groups in double-stranded DNA using NAD as a coenzyme and as the energy source for the reaction. It is essential for DNA replication and repair of damaged DNA. This chain is DNA ligase, found in Chlamydia trachomatis serovar A (strain ATCC VR-571B / DSM 19440 / HAR-13).